Consider the following 177-residue polypeptide: Bifunctional protein PyrR (177 aa).

The short motif at 99 to 111 (VVLVDDVIYKGRT) is the PRPP-binding element.

Belongs to the purine/pyrimidine phosphoribosyltransferase family. PyrR subfamily.

It catalyses the reaction UMP + diphosphate = 5-phospho-alpha-D-ribose 1-diphosphate + uracil. Functionally, regulates the transcription of the pyrimidine nucleotide (pyr) operon in response to exogenous pyrimidines. Also displays a weak uracil phosphoribosyltransferase activity which is not physiologically significant. In Gloeothece citriformis (strain PCC 7424) (Cyanothece sp. (strain PCC 7424)), this protein is Bifunctional protein PyrR.